The following is a 91-amino-acid chain: Small ribosomal subunit protein uS19 (91 aa).

It belongs to the universal ribosomal protein uS19 family.

Functionally, protein S19 forms a complex with S13 that binds strongly to the 16S ribosomal RNA. In Pseudomonas paraeruginosa (strain DSM 24068 / PA7) (Pseudomonas aeruginosa (strain PA7)), this protein is Small ribosomal subunit protein uS19.